A 426-amino-acid polypeptide reads, in one-letter code: MSEVDVVILAAGKGSRMKDDLSKPLHKVAGLPMLEWICRAVRKFNPKNIIAVQGADEDFSSYVDETVVQKEQLGSADALRCAFPKIDAEKLIVINADMPLMTENDLVDLVEKGEGFDAALLTADLKKPFGYGRVIPVGERNVVEQIVEERDATADQKKLHLVNAGVYLFRADYIKRAINNVTTDNSQSEYYLTDALPGAKIVQVADWHDILGVNTQQQLAAVSKIARKRINDQIMANGVTMIDPLTTYIDANVLVGTGTIIKPGTVIEHDSVIGAENEIGPYAHLREKTVTGIDVHIGNFVETKNAKIGDHTHIGHLTYVGDAEVGQAVNIGAGTIFVNYDGKNKHMTKVGDRAFIGSNSKLVAPVEIASEAITAAGSTITDNVDQHAMGIARQRQTNKSDFWQRMPHEDFATEYDAKHDQRDDQP.

Residues 1-216 (MSEVDVVILA…WHDILGVNTQ (216 aa)) form a pyrophosphorylase region. Residues 9 to 12 (LAAG), Lys-23, and Gln-69 each bind UDP-N-acetyl-alpha-D-glucosamine. Asp-97 contributes to the Mg(2+) binding site. Positions 132, 148, 163, and 214 each coordinate UDP-N-acetyl-alpha-D-glucosamine. Asn-214 lines the Mg(2+) pocket. The linker stretch occupies residues 217 to 237 (QQLAAVSKIARKRINDQIMAN). The segment at 238–426 (GVTMIDPLTT…AKHDQRDDQP (189 aa)) is N-acetyltransferase. Residues Arg-286 and Lys-304 each contribute to the UDP-N-acetyl-alpha-D-glucosamine site. Catalysis depends on His-316, which acts as the Proton acceptor. Residues Tyr-319 and Asn-330 each contribute to the UDP-N-acetyl-alpha-D-glucosamine site. Residues Ala-333, 339–340 (NY), Ser-358, Ala-376, and Arg-393 contribute to the acetyl-CoA site.

It in the N-terminal section; belongs to the N-acetylglucosamine-1-phosphate uridyltransferase family. In the C-terminal section; belongs to the transferase hexapeptide repeat family. In terms of assembly, homotrimer. Requires Mg(2+) as cofactor.

It localises to the cytoplasm. It carries out the reaction alpha-D-glucosamine 1-phosphate + acetyl-CoA = N-acetyl-alpha-D-glucosamine 1-phosphate + CoA + H(+). The catalysed reaction is N-acetyl-alpha-D-glucosamine 1-phosphate + UTP + H(+) = UDP-N-acetyl-alpha-D-glucosamine + diphosphate. Its pathway is nucleotide-sugar biosynthesis; UDP-N-acetyl-alpha-D-glucosamine biosynthesis; N-acetyl-alpha-D-glucosamine 1-phosphate from alpha-D-glucosamine 6-phosphate (route II): step 2/2. It functions in the pathway nucleotide-sugar biosynthesis; UDP-N-acetyl-alpha-D-glucosamine biosynthesis; UDP-N-acetyl-alpha-D-glucosamine from N-acetyl-alpha-D-glucosamine 1-phosphate: step 1/1. It participates in bacterial outer membrane biogenesis; LPS lipid A biosynthesis. In terms of biological role, catalyzes the last two sequential reactions in the de novo biosynthetic pathway for UDP-N-acetylglucosamine (UDP-GlcNAc). The C-terminal domain catalyzes the transfer of acetyl group from acetyl coenzyme A to glucosamine-1-phosphate (GlcN-1-P) to produce N-acetylglucosamine-1-phosphate (GlcNAc-1-P), which is converted into UDP-GlcNAc by the transfer of uridine 5-monophosphate (from uridine 5-triphosphate), a reaction catalyzed by the N-terminal domain. This is Bifunctional protein GlmU from Oenococcus oeni (strain ATCC BAA-331 / PSU-1).